A 496-amino-acid polypeptide reads, in one-letter code: NADP-dependent glyceraldehyde-3-phosphate dehydrogenase (496 aa).

Residue Ala2 is modified to N-acetylalanine. At Thr4 the chain carries Phosphothreonine. Substrate is bound by residues Arg116 and Asn169–Tyr170. Residues Lys192, Thr195, and Asp230 each contribute to the NADP(+) site. NAD(+) is bound at residue Gly245 to Gly249. Glu264 serves as the catalytic Proton acceptor. Arg297–Thr299 contacts substrate. Cys298 acts as the Nucleophile in catalysis. Glu391 is an NADP(+) binding site. Arg451 lines the substrate pocket.

Belongs to the aldehyde dehydrogenase family.

The protein localises to the cytoplasm. It catalyses the reaction D-glyceraldehyde 3-phosphate + NADP(+) + H2O = (2R)-3-phosphoglycerate + NADPH + 2 H(+). Its function is as follows. Important as a means of generating NADPH for biosynthetic reactions. This is NADP-dependent glyceraldehyde-3-phosphate dehydrogenase (ALDH11A3) from Arabidopsis thaliana (Mouse-ear cress).